Reading from the N-terminus, the 316-residue chain is 4-hydroxy-3-methylbut-2-enyl diphosphate reductase (316 aa).

Cys12 contacts [4Fe-4S] cluster. Positions 41 and 74 each coordinate (2E)-4-hydroxy-3-methylbut-2-enyl diphosphate. His41 and His74 together coordinate dimethylallyl diphosphate. Residues His41 and His74 each coordinate isopentenyl diphosphate. Position 96 (Cys96) interacts with [4Fe-4S] cluster. His124 is a binding site for (2E)-4-hydroxy-3-methylbut-2-enyl diphosphate. A dimethylallyl diphosphate-binding site is contributed by His124. His124 provides a ligand contact to isopentenyl diphosphate. Glu126 functions as the Proton donor in the catalytic mechanism. (2E)-4-hydroxy-3-methylbut-2-enyl diphosphate is bound at residue Thr168. Residue Cys198 participates in [4Fe-4S] cluster binding. (2E)-4-hydroxy-3-methylbut-2-enyl diphosphate is bound by residues Ser226, Ser227, Asn228, and Ser270. 4 residues coordinate dimethylallyl diphosphate: Ser226, Ser227, Asn228, and Ser270. The isopentenyl diphosphate site is built by Ser226, Ser227, Asn228, and Ser270.

The protein belongs to the IspH family. Requires [4Fe-4S] cluster as cofactor.

It catalyses the reaction isopentenyl diphosphate + 2 oxidized [2Fe-2S]-[ferredoxin] + H2O = (2E)-4-hydroxy-3-methylbut-2-enyl diphosphate + 2 reduced [2Fe-2S]-[ferredoxin] + 2 H(+). The enzyme catalyses dimethylallyl diphosphate + 2 oxidized [2Fe-2S]-[ferredoxin] + H2O = (2E)-4-hydroxy-3-methylbut-2-enyl diphosphate + 2 reduced [2Fe-2S]-[ferredoxin] + 2 H(+). Its pathway is isoprenoid biosynthesis; dimethylallyl diphosphate biosynthesis; dimethylallyl diphosphate from (2E)-4-hydroxy-3-methylbutenyl diphosphate: step 1/1. The protein operates within isoprenoid biosynthesis; isopentenyl diphosphate biosynthesis via DXP pathway; isopentenyl diphosphate from 1-deoxy-D-xylulose 5-phosphate: step 6/6. Its function is as follows. Catalyzes the conversion of 1-hydroxy-2-methyl-2-(E)-butenyl 4-diphosphate (HMBPP) into a mixture of isopentenyl diphosphate (IPP) and dimethylallyl diphosphate (DMAPP). Acts in the terminal step of the DOXP/MEP pathway for isoprenoid precursor biosynthesis. This chain is 4-hydroxy-3-methylbut-2-enyl diphosphate reductase, found in Marinobacter nauticus (strain ATCC 700491 / DSM 11845 / VT8) (Marinobacter aquaeolei).